Here is a 289-residue protein sequence, read N- to C-terminus: Oxaloacetate decarboxylase (289 aa).

S50 serves as a coordination point for substrate. A Mg(2+)-binding site is contributed by D88. Substrate contacts are provided by R159 and H235.

Belongs to the isocitrate lyase/PEP mutase superfamily. Oxaloacetate decarboxylase family. In terms of assembly, homotetramer; dimer of dimers. Requires Mg(2+) as cofactor.

The catalysed reaction is oxaloacetate + H(+) = pyruvate + CO2. Its function is as follows. Catalyzes the decarboxylation of oxaloacetate into pyruvate. Seems to play a role in maintaining cellular concentrations of bicarbonate and pyruvate. The polypeptide is Oxaloacetate decarboxylase (Pseudomonas syringae pv. tomato (strain ATCC BAA-871 / DC3000)).